Here is a 477-residue protein sequence, read N- to C-terminus: Cysteine protease ATG4b (477 aa).

Residues 11–39 (SKCSSSSTSEKRDISSPTSLVSDSASSDN) form a disordered region. Polar residues predominate over residues 25 to 39 (SSPTSLVSDSASSDN). The active-site Nucleophile is cysteine 173. Catalysis depends on residues aspartate 368 and histidine 370. The segment at 453–477 (AETSSSTETSTEISGEEHEDDWQLL) is disordered. A compositionally biased stretch (low complexity) spans 454–465 (ETSSSTETSTEI).

This sequence belongs to the peptidase C54 family. Interacts with ATG8a and ATG8d. In terms of tissue distribution, constitutively expressed.

The protein resides in the cytoplasm. It carries out the reaction [protein]-C-terminal L-amino acid-glycyl-phosphatidylethanolamide + H2O = [protein]-C-terminal L-amino acid-glycine + a 1,2-diacyl-sn-glycero-3-phosphoethanolamine. In terms of biological role, cysteine protease that plays a key role in autophagy by mediating both proteolytic activation and delipidation of ATG8 family proteins. The protease activity is required for proteolytic activation of ATG8 family proteins: cleaves the C-terminal amino acid of ATG8 proteins to reveal a C-terminal glycine. Exposure of the glycine at the C-terminus is essential for ATG8 proteins conjugation to phosphatidylethanolamine (PE) and insertion to membranes, which is necessary for autophagy. In addition to the protease activity, also mediates delipidation of PE-conjugated ATG8 proteins. In Arabidopsis thaliana (Mouse-ear cress), this protein is Cysteine protease ATG4b.